Here is a 967-residue protein sequence, read N- to C-terminus: Leucine--tRNA ligase (967 aa).

The short motif at 43–53 (PYLSGHLHVGH) is the 'HIGH' region element. Residues 650–654 (KMSKS) carry the 'KMSKS' region motif. K653 provides a ligand contact to ATP.

Belongs to the class-I aminoacyl-tRNA synthetase family.

It is found in the cytoplasm. It carries out the reaction tRNA(Leu) + L-leucine + ATP = L-leucyl-tRNA(Leu) + AMP + diphosphate. This is Leucine--tRNA ligase from Thermococcus onnurineus (strain NA1).